A 333-amino-acid chain; its full sequence is Adenosine deaminase (333 aa).

2 residues coordinate Zn(2+): H12 and H14. 3 residues coordinate substrate: H14, D16, and G170. Residue H197 coordinates Zn(2+). Residue E200 is the Proton donor of the active site. Zn(2+) is bound at residue D278. Substrate is bound at residue D279.

This sequence belongs to the metallo-dependent hydrolases superfamily. Adenosine and AMP deaminases family. Adenosine deaminase subfamily. It depends on Zn(2+) as a cofactor.

It carries out the reaction adenosine + H2O + H(+) = inosine + NH4(+). It catalyses the reaction 2'-deoxyadenosine + H2O + H(+) = 2'-deoxyinosine + NH4(+). Its function is as follows. Catalyzes the hydrolytic deamination of adenosine and 2-deoxyadenosine. The chain is Adenosine deaminase from Photorhabdus laumondii subsp. laumondii (strain DSM 15139 / CIP 105565 / TT01) (Photorhabdus luminescens subsp. laumondii).